The sequence spans 409 residues: Multifunctional CCA protein (409 aa).

Gly-8 and Arg-11 together coordinate ATP. Residues Gly-8 and Arg-11 each coordinate CTP. Mg(2+) contacts are provided by Glu-21 and Asp-23. Residues Arg-91, Arg-137, and Arg-140 each coordinate ATP. CTP is bound by residues Arg-91, Arg-137, and Arg-140. One can recognise an HD domain in the interval 228-329; it reads TGVHTLMVLT…LKALEGLDAF (102 aa).

Belongs to the tRNA nucleotidyltransferase/poly(A) polymerase family. Bacterial CCA-adding enzyme type 1 subfamily. In terms of assembly, monomer. Can also form homodimers and oligomers. Mg(2+) serves as cofactor. The cofactor is Ni(2+).

It catalyses the reaction a tRNA precursor + 2 CTP + ATP = a tRNA with a 3' CCA end + 3 diphosphate. The catalysed reaction is a tRNA with a 3' CCA end + 2 CTP + ATP = a tRNA with a 3' CCACCA end + 3 diphosphate. Its function is as follows. Catalyzes the addition and repair of the essential 3'-terminal CCA sequence in tRNAs without using a nucleic acid template. Adds these three nucleotides in the order of C, C, and A to the tRNA nucleotide-73, using CTP and ATP as substrates and producing inorganic pyrophosphate. tRNA 3'-terminal CCA addition is required both for tRNA processing and repair. Also involved in tRNA surveillance by mediating tandem CCA addition to generate a CCACCA at the 3' terminus of unstable tRNAs. While stable tRNAs receive only 3'-terminal CCA, unstable tRNAs are marked with CCACCA and rapidly degraded. In Thioalkalivibrio sulfidiphilus (strain HL-EbGR7), this protein is Multifunctional CCA protein.